A 285-amino-acid chain; its full sequence is RING finger protein 223 (285 aa).

Residues Cys-81–Arg-132 form an RING-type zinc finger. The chain crosses the membrane as a helical span at residues Val-230–Cys-250.

The protein localises to the membrane. This chain is RING finger protein 223 (Rnf223), found in Mus musculus (Mouse).